A 313-amino-acid polypeptide reads, in one-letter code: Peptidyl-prolyl cis-trans isomerase 9 (313 aa).

The PPIase cyclophilin-type domain occupies 9 to 174 (FLDMALDEKP…AKVRIFNSGE (166 aa)). Basic and acidic residues-rich tracts occupy residues 216 to 230 (EERE…ESSR) and 253 to 269 (RGDR…KDDF). Disordered regions lie at residues 216–274 (EERE…IAVR) and 288–313 (TPEH…DLQP).

It belongs to the cyclophilin-type PPIase family.

The enzyme catalyses [protein]-peptidylproline (omega=180) = [protein]-peptidylproline (omega=0). Its function is as follows. PPIases accelerate the folding of proteins. It catalyzes the cis-trans isomerization of proline imid ic peptide bonds in oligopeptides. Thought to function as a catalyst in the folding and modification of cuticle collagens. The protein is Peptidyl-prolyl cis-trans isomerase 9 of Caenorhabditis briggsae.